A 335-amino-acid polypeptide reads, in one-letter code: tRNA N6-adenosine threonylcarbamoyltransferase (335 aa).

Fe cation is bound by residues H110 and H114. Substrate-binding positions include 132 to 136 (LVSGG), D165, G178, and N271. D299 contacts Fe cation.

It belongs to the KAE1 / TsaD family. Fe(2+) serves as cofactor.

It is found in the cytoplasm. The enzyme catalyses L-threonylcarbamoyladenylate + adenosine(37) in tRNA = N(6)-L-threonylcarbamoyladenosine(37) in tRNA + AMP + H(+). Its function is as follows. Required for the formation of a threonylcarbamoyl group on adenosine at position 37 (t(6)A37) in tRNAs that read codons beginning with adenine. Is involved in the transfer of the threonylcarbamoyl moiety of threonylcarbamoyl-AMP (TC-AMP) to the N6 group of A37, together with TsaE and TsaB. TsaD likely plays a direct catalytic role in this reaction. In Campylobacter jejuni subsp. doylei (strain ATCC BAA-1458 / RM4099 / 269.97), this protein is tRNA N6-adenosine threonylcarbamoyltransferase.